Reading from the N-terminus, the 407-residue chain is RING-H2 finger protein ATL43 (407 aa).

Residues 1–22 (MSSSSLILLFSTLSLFLNVSLA) form the signal peptide. Residues 57–77 (GIAVVIAVLTAFFSLTFLLLL) form a helical membrane-spanning segment. The segment at 146 to 188 (CAVCLARFEPTEVLRLLPKCKHAFHVECVDTWLDAHSTCPLCR) adopts an RING-type; atypical zinc-finger fold.

It belongs to the RING-type zinc finger family. ATL subfamily.

It localises to the membrane. The enzyme catalyses S-ubiquitinyl-[E2 ubiquitin-conjugating enzyme]-L-cysteine + [acceptor protein]-L-lysine = [E2 ubiquitin-conjugating enzyme]-L-cysteine + N(6)-ubiquitinyl-[acceptor protein]-L-lysine.. Its pathway is protein modification; protein ubiquitination. The chain is RING-H2 finger protein ATL43 (ATL43) from Arabidopsis thaliana (Mouse-ear cress).